Reading from the N-terminus, the 544-residue chain is Serine/threonine-protein kinase PAK 3 (544 aa).

The segment at 1–73 is disordered; the sequence is MSDSLDNEEK…EKERPEISLP (73 aa). Phosphoserine is present on residues Ser-2 and Ser-4. The segment covering 18 to 32 has biased composition (polar residues); it reads MNSNNRDSSALNHSS. The residue at position 50 (Ser-50) is a Phosphoserine; by autocatalysis. Basic and acidic residues predominate over residues 63–73; the sequence is KEKERPEISLP. Residues 65–108 form a GTPase-binding region; it reads KERPEISLPSDFEHTIHVGFDAVTGEFTGIPEQWARLLQTSNIT. Residues 65–135 are autoregulatory region; the sequence is KERPEISLPS…YDSKETVNNQ (71 aa). One can recognise a CRIB domain in the interval 70-83; the sequence is ISLPSDFEHTIHVG. The linker stretch occupies residues 84 to 267; that stretch reads FDAVTGEFTG…IVSVGDPKKK (184 aa). Ser-139 bears the Phosphoserine; by autocatalysis mark. Disordered stretches follow at residues 156–197 and 213–248; these read SNTK…RPEH and PAAP…KMTD. Ser-171 is subject to Phosphoserine. Residues 171-186 show a composition bias toward acidic residues; the sequence is SEEEDEEEEEEEDDNE. Residues 224–235 are compositionally biased toward polar residues; it reads SAENANSSTLYR. Residues 268-519 enclose the Protein kinase domain; sequence YTRFEKIGQG…AKELLQHPFL (252 aa). ATP is bound by residues 274–282 and Lys-297; that span reads IGQGASGTV. Residue Asp-387 is the Proton acceptor of the active site. Thr-421 carries the phosphothreonine; by autocatalysis modification.

Belongs to the protein kinase superfamily. STE Ser/Thr protein kinase family. STE20 subfamily. As to quaternary structure, interacts tightly with GTP-bound but not GDP-bound CDC42/p21 and RAC1. Shows highly specific binding to the SH3 domains of phospholipase C-gamma and of adapter protein NCK. Interacts with the C-terminal of APP. Interacts with ARHGEF6 and ARHGEF7. Interacts with GIT1 and GIT2. The cofactor is Mg(2+). In terms of processing, autophosphorylated when activated by CDC42/p21. Neddylated. As to expression, detected at high levels in the brain and at low levels in the testis.

The protein localises to the cytoplasm. The enzyme catalyses L-seryl-[protein] + ATP = O-phospho-L-seryl-[protein] + ADP + H(+). It catalyses the reaction L-threonyl-[protein] + ATP = O-phospho-L-threonyl-[protein] + ADP + H(+). Its activity is regulated as follows. Activated by binding small G proteins. Binding of GTP-bound CDC42 or RAC1 to the autoregulatory region releases monomers from the autoinhibited dimer, enables phosphorylation of Thr-421 and allows the kinase domain to adopt an active structure. Its function is as follows. Serine/threonine protein kinase that plays a role in a variety of different signaling pathways including cytoskeleton regulation, cell migration, or cell cycle regulation. Plays a role in dendrite spine morphogenesis as well as synapse formation and plasticity. Acts as a downstream effector of the small GTPases CDC42 and RAC1. Activation by the binding of active CDC42 and RAC1 results in a conformational change and a subsequent autophosphorylation on several serine and/or threonine residues. Phosphorylates MAPK4 and MAPK6 and activates the downstream target MAPKAPK5, a regulator of F-actin polymerization and cell migration. Additionally, phosphorylates TNNI3/troponin I to modulate calcium sensitivity and relaxation kinetics of thin myofilaments. May also be involved in early neuronal development. In hippocampal neurons, necessary for the formation of dendritic spines and excitatory synapses; this function is dependent on kinase activity and may be exerted by the regulation of actomyosin contractility through the phosphorylation of myosin II regulatory light chain (MLC). This chain is Serine/threonine-protein kinase PAK 3 (Pak3), found in Rattus norvegicus (Rat).